The sequence spans 309 residues: Beta-lactamase (309 aa).

The N-terminal stretch at 1–28 (MMILKNKRMLKIGICVGILGLSITSLEA) is a signal peptide. The active-site Acyl-ester intermediate is Ser92. Glu188 serves as the catalytic Proton acceptor. 254-256 (KSG) serves as a coordination point for substrate.

The protein belongs to the class-A beta-lactamase family.

The enzyme catalyses a beta-lactam + H2O = a substituted beta-amino acid. In terms of biological role, this protein is a beta-lactamase with a substrate specificity for penicillins. The chain is Beta-lactamase (bla) from Bacillus thuringiensis.